A 173-amino-acid polypeptide reads, in one-letter code: Crossover junction endodeoxyribonuclease RuvC (173 aa).

Active-site residues include Asp-8, Glu-67, and Asp-139. Mg(2+) contacts are provided by Asp-8, Glu-67, and Asp-139.

It belongs to the RuvC family. In terms of assembly, homodimer which binds Holliday junction (HJ) DNA. The HJ becomes 2-fold symmetrical on binding to RuvC with unstacked arms; it has a different conformation from HJ DNA in complex with RuvA. In the full resolvosome a probable DNA-RuvA(4)-RuvB(12)-RuvC(2) complex forms which resolves the HJ. Mg(2+) is required as a cofactor.

It is found in the cytoplasm. The enzyme catalyses Endonucleolytic cleavage at a junction such as a reciprocal single-stranded crossover between two homologous DNA duplexes (Holliday junction).. Functionally, the RuvA-RuvB-RuvC complex processes Holliday junction (HJ) DNA during genetic recombination and DNA repair. Endonuclease that resolves HJ intermediates. Cleaves cruciform DNA by making single-stranded nicks across the HJ at symmetrical positions within the homologous arms, yielding a 5'-phosphate and a 3'-hydroxyl group; requires a central core of homology in the junction. The consensus cleavage sequence is 5'-(A/T)TT(C/G)-3'. Cleavage occurs on the 3'-side of the TT dinucleotide at the point of strand exchange. HJ branch migration catalyzed by RuvA-RuvB allows RuvC to scan DNA until it finds its consensus sequence, where it cleaves and resolves the cruciform DNA. This Shewanella loihica (strain ATCC BAA-1088 / PV-4) protein is Crossover junction endodeoxyribonuclease RuvC.